The primary structure comprises 377 residues: N-acetyldiaminopimelate deacetylase (377 aa).

The active site involves D69. E128 functions as the Proton acceptor in the catalytic mechanism.

It belongs to the peptidase M20A family. N-acetyldiaminopimelate deacetylase subfamily.

The catalysed reaction is N-acetyl-(2S,6S)-2,6-diaminopimelate + H2O = (2S,6S)-2,6-diaminopimelate + acetate. Its pathway is amino-acid biosynthesis; L-lysine biosynthesis via DAP pathway; LL-2,6-diaminopimelate from (S)-tetrahydrodipicolinate (acetylase route): step 3/3. In terms of biological role, catalyzes the conversion of N-acetyl-diaminopimelate to diaminopimelate and acetate. This Streptococcus gordonii (strain Challis / ATCC 35105 / BCRC 15272 / CH1 / DL1 / V288) protein is N-acetyldiaminopimelate deacetylase.